Reading from the N-terminus, the 1199-residue chain is Pyruvate-flavodoxin oxidoreductase (1199 aa).

4Fe-4S ferredoxin-type domains are found at residues 699–728 (EIPVWDTDICVQCSKCVMVCPHAAIRAKVY) and 755–784 (FTIQVAPEDCTGCAICVNVCPAKNKSEPSL). [4Fe-4S] cluster contacts are provided by C708, C711, C714, C718, C764, C767, C770, C774, C838, C841, C866, and C1103.

The protein belongs to the pyruvate:ferredoxin/flavodoxin oxidoreductase family. It depends on [4Fe-4S] cluster as a cofactor.

It catalyses the reaction oxidized [flavodoxin] + pyruvate + CoA + 2 H(+) = reduced [flavodoxin] + acetyl-CoA + CO2. Oxidoreductase required for the transfer of electrons from pyruvate to flavodoxin, which reduces nitrogenase. This chain is Pyruvate-flavodoxin oxidoreductase (nifJ), found in Nostoc sp. (strain PCC 7120 / SAG 25.82 / UTEX 2576).